The chain runs to 600 residues: Aspartate--tRNA(Asp/Asn) ligase (600 aa).

Glutamate 187 is an L-aspartate binding site. Residues 211–214 (QIFK) form an aspartate region. Residues arginine 233 and histidine 463 each coordinate L-aspartate. 233 to 235 (RDE) contacts ATP. Glutamate 497 is a binding site for ATP. An L-aspartate-binding site is contributed by arginine 504. Residue 549–552 (GVDR) participates in ATP binding.

The protein belongs to the class-II aminoacyl-tRNA synthetase family. Type 1 subfamily. Homodimer.

It localises to the cytoplasm. The catalysed reaction is tRNA(Asx) + L-aspartate + ATP = L-aspartyl-tRNA(Asx) + AMP + diphosphate. Functionally, aspartyl-tRNA synthetase with relaxed tRNA specificity since it is able to aspartylate not only its cognate tRNA(Asp) but also tRNA(Asn). Reaction proceeds in two steps: L-aspartate is first activated by ATP to form Asp-AMP and then transferred to the acceptor end of tRNA(Asp/Asn). This chain is Aspartate--tRNA(Asp/Asn) ligase, found in Wolbachia sp. subsp. Drosophila simulans (strain wRi).